A 221-amino-acid chain; its full sequence is Interleukin-12 subunit alpha (221 aa).

Positions 1–25 are cleaved as a signal peptide; the sequence is MCPLRSLLLISTLVLLHHLPHLSLG. 3 cysteine pairs are disulfide-bonded: C39-C112, C66-C198, and C87-C125. N95 is a glycosylation site (N-linked (GlcNAc...) asparagine).

Belongs to the IL-6 superfamily. As to quaternary structure, heterodimer with IL12B; disulfide-linked. This heterodimer is known as interleukin IL-12. Heterodimer with EBI3/IL27B; not disulfide-linked. This heterodimer is known as interleukin IL-35. Interacts with NBR1; this interaction promotes IL-12 secretion.

It localises to the secreted. Heterodimerizes with IL12B to form the IL-12 cytokine or with EBI3/IL27B to form the IL-35 cytokine. IL-12 is primarily produced by professional antigen-presenting cells (APCs) such as B-cells and dendritic cells (DCs) as well as macrophages and granulocytes and regulates T-cell and natural killer-cell responses, induces the production of interferon-gamma (IFN-gamma), favors the differentiation of T-helper 1 (Th1) cells and is an important link between innate resistance and adaptive immunity. Mechanistically, exerts its biological effects through a receptor composed of IL12R1 and IL12R2 subunits. Binding to the receptor results in the rapid tyrosine phosphorylation of a number of cellular substrates including the JAK family kinases TYK2 and JAK2. In turn, recruited STAT4 gets phosphorylated and translocates to the nucleus where it regulates cytokine/growth factor responsive genes. As part of IL-35, plays essential roles in maintaining the immune homeostasis of the liver microenvironment and also functions as an immune-suppressive cytokine. Mediates biological events through unconventional receptors composed of IL12RB2 and gp130/IL6ST heterodimers or homodimers. Signaling requires the transcription factors STAT1 and STAT4, which form a unique heterodimer that binds to distinct DNA sites. This chain is Interleukin-12 subunit alpha (IL12A), found in Bubalus carabanensis (Swamp type water buffalo).